The primary structure comprises 676 residues: RNA helicase NPH-II (676 aa).

One can recognise a Helicase ATP-binding domain in the interval 172–347 (FSAWISHRPV…VFLPNPAFIH (176 aa)). 185–192 (GGTGVGKT) contributes to the ATP binding site. A DEXH box motif is present at residues 296-299 (DEVH). In terms of domain architecture, Helicase C-terminal spans 366–535 (NPSSRMAYIE…NYILYANKFN (170 aa)).

This sequence belongs to the DEAD box helicase family. DEAH subfamily. In terms of assembly, monomer.

It is found in the virion. It catalyses the reaction ATP + H2O = ADP + phosphate + H(+). Functionally, NTP-dependent helicase that catalyzes unidirectional unwinding of 3'tailed duplex RNAs and plays an important role during transcription of early mRNAs, presumably by preventing R-loop formation behind the elongating RNA polymerase. Might also play a role in the export of newly synthesized mRNA chains out of the core into the cytoplasm. Required for replication and propagation of viral particles. This chain is RNA helicase NPH-II (OPG084), found in Vaccinia virus (strain Copenhagen) (VACV).